A 350-amino-acid chain; its full sequence is tRNA uridine(34) hydroxylase (350 aa).

Residues 146–240 (DDPDALFIDM…YARKAREQGL (95 aa)) form the Rhodanese domain. Cys200 functions as the Cysteine persulfide intermediate in the catalytic mechanism.

It belongs to the TrhO family.

The catalysed reaction is uridine(34) in tRNA + AH2 + O2 = 5-hydroxyuridine(34) in tRNA + A + H2O. Catalyzes oxygen-dependent 5-hydroxyuridine (ho5U) modification at position 34 in tRNAs, the first step in 5-carboxymethoxyuridine (cmo5U) biosynthesis. May be part of an alternate pathway, which is able to bypass cmo5U biogenesis in a subset of tRNAs under aerobic conditions. The protein is tRNA uridine(34) hydroxylase of Escherichia coli (strain SE11).